The chain runs to 2253 residues: Polycystin family receptor for egg jelly (2253 aa).

A signal peptide spans 1 to 19; sequence MRPGPALLLLGVGLSLSVG. At 20–1184 the chain is on the extracellular side; that stretch reads RLPLPPVPRG…NIIKSLHQNP (1165 aa). The segment covering 154–169 has biased composition (low complexity); it reads RPASPAARVSPRSAAP. The disordered stretch occupies residues 154 to 177; that stretch reads RPASPAARVSPRSAAPGPRPQQGF. Asparagine 197, asparagine 242, asparagine 295, asparagine 306, asparagine 345, asparagine 349, asparagine 481, asparagine 674, asparagine 849, asparagine 890, asparagine 923, asparagine 939, asparagine 958, and asparagine 965 each carry an N-linked (GlcNAc...) asparagine glycan. Positions 215 to 913 constitute an REJ domain; sequence CVIQRVRINT…STMFCDFTND (699 aa). Residues 1185-1205 traverse the membrane as a helical segment; it reads VTLFTVLFIILLYVGLAFWAL. Residues 1206–1389 lie on the Cytoplasmic side of the membrane; sequence YRDEMDQHLR…VAKTFNRLQR (184 aa). Residues 1230 to 1347 enclose the PLAT domain; the sequence is LCYLVTIFTG…TLDRTFHVTH (118 aa). A helical membrane pass occupies residues 1390–1410; it reads LSCCLAMLLSSLLCNIMFFNL. The Extracellular portion of the chain corresponds to 1411 to 1427; sequence NRQEQTESRERKYMRSM. The helical transmembrane segment at 1428-1448 threads the bilayer; the sequence is MIGIESVLITIPVQLLITFLF. Topologically, residues 1449-1576 are cytoplasmic; that stretch reads TCSQRKPQAD…KPRIVLPWWC (128 aa). Positions 1494–1562 are disordered; the sequence is PREVAKPASK…EQHPSQKDLQ (69 aa). The segment covering 1517-1527 has biased composition (basic residues); it reads SKPKHRHRKAQ. The segment covering 1549-1558 has biased composition (basic and acidic residues); it reads DVHSEQHPSQ. A helical membrane pass occupies residues 1577–1597; sequence VYVAWFLVFATSSISSFFIVF. The Extracellular portion of the chain corresponds to 1598–1607; the sequence is YGLTYGYDKS. A helical transmembrane segment spans residues 1608–1628; sequence IEWLFASFCSFCQSVLLVQPS. Residues 1629–1708 are Cytoplasmic-facing; it reads KIILLSGFRT…RKKRIKRRAL (80 aa). The helical transmembrane segment at 1709 to 1729 threads the bilayer; sequence LFLSYILTHFIFLALLLILIV. Topologically, residues 1730–1966 are extracellular; sequence LLRHTDCFYY…FDRKASAEIY (237 aa). 3 N-linked (GlcNAc...) asparagine glycosylation sites follow: asparagine 1836, asparagine 1893, and asparagine 1944. A helical membrane pass occupies residues 1967 to 1987; it reads LYVAILIFFLAYVVDEGCIIM. The Cytoplasmic segment spans residues 1988 to 1996; it reads QERASYVRS. A helical membrane pass occupies residues 1997–2017; sequence VYNLLNFALKCIFTVLIVLFL. Residues 2018 to 2042 lie on the Extracellular side of the membrane; sequence RKHFLATGIIRFYLSNPEDFIPFHA. The helical transmembrane segment at 2043–2063 threads the bilayer; it reads VSQVDHIMRIILGFLLFLTIL. Residues 2064 to 2091 lie on the Cytoplasmic side of the membrane; sequence KTLRYSRFFYDVRLAQRAIQAALPGICH. A helical transmembrane segment spans residues 2092-2112; sequence MAFVVSVYFFVYMAFGYLVFG. The Extracellular segment spans residues 2113–2145; the sequence is QHEWNYSNLIHSTQTVFSYCVSAFQNTEFSNNR. The helical transmembrane segment at 2146–2166 threads the bilayer; the sequence is ILGVLFLSSFMLVMICVLINL. Residues 2167-2253 are Cytoplasmic-facing; it reads FQAVILSAYE…NGKKMVYLVV (87 aa).

This sequence belongs to the polycystin family. Exclusively expressed in testis.

Its subcellular location is the cell membrane. The protein resides in the cytoplasmic vesicle. The protein localises to the secretory vesicle. It is found in the acrosome membrane. It localises to the nucleus. Functionally, testis-specific protein that controls sperm transport and the timing of zona pellucida-evoked exocytosis of the sperm acrosome. The sequence is that of Polycystin family receptor for egg jelly from Homo sapiens (Human).